Reading from the N-terminus, the 280-residue chain is Beta carbonic anhydrase 4 (280 aa).

Ala-2 carries the N-acetylalanine modification. Positions 47–76 form a coiled coil; the sequence is NVAAAKIKALTAELKELDSSNSDAIERIKT. Phosphothreonine is present on Thr-57. Residue Ser-117 is modified to Phosphoserine. Cys-223 bears the S-nitrosocysteine mark.

This sequence belongs to the beta-class carbonic anhydrase family. As to quaternary structure, interacts with DTX56. As to expression, strongly expressed in aerial tissues including leaves, stems, flowers and siliques. Accumulates in both guard cells and mesophyll cells.

It localises to the cell membrane. It catalyses the reaction hydrogencarbonate + H(+) = CO2 + H2O. Functionally, reversible hydration of carbon dioxide. Together with BCA1, involved in the CO(2) signaling pathway which controls gas-exchange between plants and the atmosphere by modulating stomatal development and movements. Promotes water use efficiency. In Arabidopsis thaliana (Mouse-ear cress), this protein is Beta carbonic anhydrase 4.